We begin with the raw amino-acid sequence, 944 residues long: 2-oxoglutarate dehydrogenase E1 component (944 aa).

The interval 918 to 944 is disordered; it reads SSTAEGDPTVHKKEQERIVSDSLTRKN. Residues 925-936 are compositionally biased toward basic and acidic residues; that stretch reads PTVHKKEQERIV.

Belongs to the alpha-ketoglutarate dehydrogenase family. Homodimer. Part of the 2-oxoglutarate dehydrogenase (OGDH) complex composed of E1 (2-oxoglutarate dehydrogenase), E2 (dihydrolipoamide succinyltransferase) and E3 (dihydrolipoamide dehydrogenase); the complex contains multiple copies of the three enzymatic components (E1, E2 and E3). Thiamine diphosphate serves as cofactor.

The enzyme catalyses N(6)-[(R)-lipoyl]-L-lysyl-[protein] + 2-oxoglutarate + H(+) = N(6)-[(R)-S(8)-succinyldihydrolipoyl]-L-lysyl-[protein] + CO2. Its function is as follows. E1 component of the 2-oxoglutarate dehydrogenase (OGDH) complex which catalyzes the decarboxylation of 2-oxoglutarate, the first step in the conversion of 2-oxoglutarate to succinyl-CoA and CO(2). This is 2-oxoglutarate dehydrogenase E1 component from Bacillus pumilus (strain SAFR-032).